A 152-amino-acid polypeptide reads, in one-letter code: MVKAVAVLSSSECVSGTILFSQDGDAPTTVTGNVSGLKPGLHGFHVHALGDTTNGCMSTGPHYNPAGKEHGAPEDENRHAGDLGNITVGEDGTASFTITDEQIPLTGPQSIIGRGVVVHADPDDLGKGGHELTKTTGNAGGRVACGIIGLQG.

Residues histidine 45, histidine 47, and histidine 62 each coordinate Cu cation. Cysteine 56 and cysteine 145 form a disulfide bridge. 4 residues coordinate Zn(2+): histidine 62, histidine 70, histidine 79, and aspartate 82. Position 119 (histidine 119) interacts with Cu cation.

Belongs to the Cu-Zn superoxide dismutase family. As to quaternary structure, homodimer. Cu cation serves as cofactor. Requires Zn(2+) as cofactor.

Its subcellular location is the cytoplasm. The catalysed reaction is 2 superoxide + 2 H(+) = H2O2 + O2. Destroys radicals which are normally produced within the cells and which are toxic to biological systems. This Capsicum annuum (Capsicum pepper) protein is Superoxide dismutase [Cu-Zn] (SODCC).